Reading from the N-terminus, the 335-residue chain is Large ribosomal subunit protein uL10 (335 aa).

The disordered stretch occupies residues 300-335 (QVSEQAAEKKEEKKEEEKKGPSEEEIGGGLSSLFGG). The segment covering 305–321 (AAEKKEEKKEEEKKGPS) has biased composition (basic and acidic residues). Gly residues predominate over residues 326–335 (GGGLSSLFGG).

It belongs to the universal ribosomal protein uL10 family. As to quaternary structure, part of the 50S ribosomal subunit. Forms part of the ribosomal stalk which helps the ribosome interact with GTP-bound translation factors. Forms a heptameric L10(L12)2(L12)2(L12)2 complex, where L10 forms an elongated spine to which the L12 dimers bind in a sequential fashion.

Forms part of the ribosomal stalk, playing a central role in the interaction of the ribosome with GTP-bound translation factors. The protein is Large ribosomal subunit protein uL10 of Sulfolobus acidocaldarius (strain ATCC 33909 / DSM 639 / JCM 8929 / NBRC 15157 / NCIMB 11770).